A 423-amino-acid polypeptide reads, in one-letter code: UPF0229 protein VV1_2091 (423 aa).

Residues 81–111 are disordered; sequence QFITGDKIERPKGGQGGGGAGDGDASADGEG. Residues 93–102 show a composition bias toward gly residues; that stretch reads GGQGGGGAGD.

It belongs to the UPF0229 family.

The sequence is that of UPF0229 protein VV1_2091 from Vibrio vulnificus (strain CMCP6).